A 521-amino-acid chain; its full sequence is Nitric oxide reductase transcription regulator NorR2 (521 aa).

D56 is subject to 4-aspartylphosphate. The 230-residue stretch at 193-422 folds into the Sigma-54 factor interaction domain; it reads IIGQSEAIAN…LEHVISRAAL (230 aa). ATP is bound by residues 221 to 228 and 293 to 302; these read GETGVGKE and EVGELPLAIQ. Residues 497–516 constitute a DNA-binding region (H-T-H motif); it reads WAQAARQLGIDASNLHKLAR.

It participates in nitrogen metabolism; nitrate reduction (denitrification) [regulation]. Functionally, required for the nitric oxide (NO) induced expression of NO reductase. Not required for expression of 2 other pathway members, nitrate reductase (nirS) and nitrous oxide reductase (nosZ). This Cupriavidus necator (strain ATCC 17699 / DSM 428 / KCTC 22496 / NCIMB 10442 / H16 / Stanier 337) (Ralstonia eutropha) protein is Nitric oxide reductase transcription regulator NorR2 (norR2).